Consider the following 500-residue polypeptide: Probable malate:quinone oxidoreductase (500 aa).

Belongs to the MQO family. The cofactor is FAD.

It catalyses the reaction (S)-malate + a quinone = a quinol + oxaloacetate. Its pathway is carbohydrate metabolism; tricarboxylic acid cycle; oxaloacetate from (S)-malate (quinone route): step 1/1. This Prochlorococcus marinus (strain MIT 9211) protein is Probable malate:quinone oxidoreductase.